Consider the following 228-residue polypeptide: Sec-independent protein translocase protein TatB (228 aa).

The helical transmembrane segment at 1–21 threads the bilayer; the sequence is MFDFGLGELVFVGIIALIVLG. 2 disordered regions span residues 109–162 and 197–228; these read DFGV…AETD and PHTT…VRKS. A compositionally biased stretch (basic residues) spans 206–228; it reads AISRKRDFRPKHRAKPKLRVRKS.

It belongs to the TatB family. The Tat system comprises two distinct complexes: a TatABC complex, containing multiple copies of TatA, TatB and TatC subunits, and a separate TatA complex, containing only TatA subunits. Substrates initially bind to the TatABC complex, which probably triggers association of the separate TatA complex to form the active translocon.

Its subcellular location is the cell inner membrane. In terms of biological role, part of the twin-arginine translocation (Tat) system that transports large folded proteins containing a characteristic twin-arginine motif in their signal peptide across membranes. Together with TatC, TatB is part of a receptor directly interacting with Tat signal peptides. TatB may form an oligomeric binding site that transiently accommodates folded Tat precursor proteins before their translocation. The sequence is that of Sec-independent protein translocase protein TatB from Neisseria meningitidis serogroup B (strain ATCC BAA-335 / MC58).